Here is a 90-residue protein sequence, read N- to C-terminus: Translation initiation factor IF-1 (90 aa).

The region spanning 15 to 90 is the S1-like domain; sequence KKQKRKKEEV…TLGRIVFRHK (76 aa).

It belongs to the IF-1 family. In terms of assembly, component of the 30S ribosomal translation pre-initiation complex which assembles on the 30S ribosome in the order IF-2 and IF-3, IF-1 and N-formylmethionyl-tRNA(fMet); mRNA recruitment can occur at any time during PIC assembly.

The protein resides in the cytoplasm. One of the essential components for the initiation of protein synthesis. Stabilizes the binding of IF-2 and IF-3 on the 30S subunit to which N-formylmethionyl-tRNA(fMet) subsequently binds. Helps modulate mRNA selection, yielding the 30S pre-initiation complex (PIC). Upon addition of the 50S ribosomal subunit IF-1, IF-2 and IF-3 are released leaving the mature 70S translation initiation complex. The polypeptide is Translation initiation factor IF-1 (Mycoplasma sp).